The primary structure comprises 126 residues: Ribosome-binding factor A (126 aa).

It belongs to the RbfA family. In terms of assembly, monomer. Binds 30S ribosomal subunits, but not 50S ribosomal subunits or 70S ribosomes.

Its subcellular location is the cytoplasm. Functionally, one of several proteins that assist in the late maturation steps of the functional core of the 30S ribosomal subunit. Associates with free 30S ribosomal subunits (but not with 30S subunits that are part of 70S ribosomes or polysomes). Required for efficient processing of 16S rRNA. May interact with the 5'-terminal helix region of 16S rRNA. The polypeptide is Ribosome-binding factor A (Azoarcus sp. (strain BH72)).